Consider the following 271-residue polypeptide: Acyl-[acyl-carrier-protein]--UDP-N-acetylglucosamine O-acyltransferase (271 aa).

It belongs to the transferase hexapeptide repeat family. LpxA subfamily. In terms of assembly, homotrimer.

The protein localises to the cytoplasm. It carries out the reaction a (3R)-hydroxyacyl-[ACP] + UDP-N-acetyl-alpha-D-glucosamine = a UDP-3-O-[(3R)-3-hydroxyacyl]-N-acetyl-alpha-D-glucosamine + holo-[ACP]. Its pathway is glycolipid biosynthesis; lipid IV(A) biosynthesis; lipid IV(A) from (3R)-3-hydroxytetradecanoyl-[acyl-carrier-protein] and UDP-N-acetyl-alpha-D-glucosamine: step 1/6. Functionally, involved in the biosynthesis of lipid A, a phosphorylated glycolipid that anchors the lipopolysaccharide to the outer membrane of the cell. This is Acyl-[acyl-carrier-protein]--UDP-N-acetylglucosamine O-acyltransferase from Rhizobium rhizogenes (strain K84 / ATCC BAA-868) (Agrobacterium radiobacter).